A 134-amino-acid polypeptide reads, in one-letter code: Small ribosomal subunit protein uS8c (134 aa).

Belongs to the universal ribosomal protein uS8 family. Part of the 30S ribosomal subunit.

The protein resides in the plastid. Its subcellular location is the chloroplast. In terms of biological role, one of the primary rRNA binding proteins, it binds directly to 16S rRNA central domain where it helps coordinate assembly of the platform of the 30S subunit. The protein is Small ribosomal subunit protein uS8c (rps8) of Lotus japonicus (Lotus corniculatus var. japonicus).